The chain runs to 236 residues: Small ribosomal subunit protein uS2c (236 aa).

It belongs to the universal ribosomal protein uS2 family.

The protein localises to the plastid. Its subcellular location is the chloroplast. This chain is Small ribosomal subunit protein uS2c (rps2), found in Daucus carota (Wild carrot).